We begin with the raw amino-acid sequence, 859 residues long: Catenin delta-1 (859 aa).

Residues 15–44 (SVRAQEAQFELLSRALEEERRHVTAQLDRV) are a coiled coil. The tract at residues 226-254 (IDGPDYATTGRRGANGGDPRRRLRSYEDP) is disordered. Residues 243 to 254 (DPRRRLRSYEDP) show a composition bias toward basic and acidic residues. ARM repeat units follow at residues 279–317 (APNSGPWRHPELPEVLAMLSYTLDAVRLNAAAYLQHLSY), 320–359 (EDVKREVCRLRGIPPLISLLEDPRAPIRLAACGALKNLSY), 363–401 (RENKMAVKNCDGVPALARLLRRRGEGIEGRELAECVTGT), 402–446 (LWNL…RVEG), 464–503 (LRNISSERSEARRKMRECEGLVDSVVHILRSEVSHGLVDS), 513–552 (LRNISYHVHREIPHAEKYMESPQNASAETQNPSCFGVRRG), 574–614 (AQGY…NLCA), 621–660 (RCIRAAVRQEKGLSSLADHLTHESERVVRAICGALRNLCG), 661–700 (DNRNRELIGKHALNSLVARLSSSSAQSSALSEDTNVCVIN), and 701–746 (TIHE…GFCL).

This sequence belongs to the beta-catenin family. Interacts with C-cadherin and with zbtb33. In terms of tissue distribution, ubiquitously expressed.

The protein resides in the cell junction. The protein localises to the adherens junction. It localises to the cytoplasm. Its subcellular location is the nucleus. It is found in the cell membrane. Its function is as follows. Key regulator of cell-cell adhesion that associates with and regulates the cell adhesion properties of both C-, E- and N-cadherins, being critical for their surface stability. Beside cell-cell adhesion, regulates gene transcription through several transcription factors including ZBTB33/Kaiso2 and GLIS2, and the activity of Rho family GTPases and downstream cytoskeletal dynamics. Implicated both in cell transformation by SRC and in ligand-induced receptor signaling through the EGF, PDGF, CSF-1 and ERBB2 receptors. Required for gastrulation, axial elongation and development of the craniofacial skeleton and eye. This Xenopus laevis (African clawed frog) protein is Catenin delta-1 (ctnnd1).